Here is a 113-residue protein sequence, read N- to C-terminus: UPF0482 protein YnfB (113 aa).

Positions 1-28 are cleaved as a signal peptide; that stretch reads MNYTLSKRLCLTAMLTLAAVVYTTSAFA.

Belongs to the UPF0482 family.

The polypeptide is UPF0482 protein YnfB (Salmonella arizonae (strain ATCC BAA-731 / CDC346-86 / RSK2980)).